Reading from the N-terminus, the 222-residue chain is Protein-L-isoaspartate O-methyltransferase (222 aa).

Ser-69 is an active-site residue.

It belongs to the methyltransferase superfamily. L-isoaspartyl/D-aspartyl protein methyltransferase family.

Its subcellular location is the cytoplasm. It carries out the reaction [protein]-L-isoaspartate + S-adenosyl-L-methionine = [protein]-L-isoaspartate alpha-methyl ester + S-adenosyl-L-homocysteine. Its function is as follows. Catalyzes the methyl esterification of L-isoaspartyl residues in peptides and proteins that result from spontaneous decomposition of normal L-aspartyl and L-asparaginyl residues. It plays a role in the repair and/or degradation of damaged proteins. The sequence is that of Protein-L-isoaspartate O-methyltransferase from Caulobacter vibrioides (strain NA1000 / CB15N) (Caulobacter crescentus).